The chain runs to 211 residues: Thiamine-phosphate synthase (211 aa).

4-amino-2-methyl-5-(diphosphooxymethyl)pyrimidine contacts are provided by residues 37–41 (QLRIK) and Asn69. Mg(2+) contacts are provided by Asp70 and Asp89. Ser108 contacts 4-amino-2-methyl-5-(diphosphooxymethyl)pyrimidine. 134-136 (TQT) is a binding site for 2-[(2R,5Z)-2-carboxy-4-methylthiazol-5(2H)-ylidene]ethyl phosphate. Residue Lys137 participates in 4-amino-2-methyl-5-(diphosphooxymethyl)pyrimidine binding. 2-[(2R,5Z)-2-carboxy-4-methylthiazol-5(2H)-ylidene]ethyl phosphate is bound by residues Gly166 and 186 to 187 (VS).

It belongs to the thiamine-phosphate synthase family. Requires Mg(2+) as cofactor.

It carries out the reaction 2-[(2R,5Z)-2-carboxy-4-methylthiazol-5(2H)-ylidene]ethyl phosphate + 4-amino-2-methyl-5-(diphosphooxymethyl)pyrimidine + 2 H(+) = thiamine phosphate + CO2 + diphosphate. The catalysed reaction is 2-(2-carboxy-4-methylthiazol-5-yl)ethyl phosphate + 4-amino-2-methyl-5-(diphosphooxymethyl)pyrimidine + 2 H(+) = thiamine phosphate + CO2 + diphosphate. It catalyses the reaction 4-methyl-5-(2-phosphooxyethyl)-thiazole + 4-amino-2-methyl-5-(diphosphooxymethyl)pyrimidine + H(+) = thiamine phosphate + diphosphate. Its pathway is cofactor biosynthesis; thiamine diphosphate biosynthesis; thiamine phosphate from 4-amino-2-methyl-5-diphosphomethylpyrimidine and 4-methyl-5-(2-phosphoethyl)-thiazole: step 1/1. Functionally, condenses 4-methyl-5-(beta-hydroxyethyl)thiazole monophosphate (THZ-P) and 2-methyl-4-amino-5-hydroxymethyl pyrimidine pyrophosphate (HMP-PP) to form thiamine monophosphate (TMP). In Salmonella typhimurium (strain LT2 / SGSC1412 / ATCC 700720), this protein is Thiamine-phosphate synthase.